We begin with the raw amino-acid sequence, 475 residues long: 23S rRNA (uracil(1939)-C(5))-methyltransferase RlmD (475 aa).

In terms of domain architecture, TRAM spans 1 to 76 (MHRGDKPVNI…SRFSKAKVRE (76 aa)). [4Fe-4S] cluster contacts are provided by cysteine 89, cysteine 95, cysteine 98, and cysteine 178. Positions 299, 328, 333, 349, 377, and 398 each coordinate S-adenosyl-L-methionine. Cysteine 431 functions as the Nucleophile in the catalytic mechanism.

The protein belongs to the class I-like SAM-binding methyltransferase superfamily. RNA M5U methyltransferase family. RlmD subfamily.

The enzyme catalyses uridine(1939) in 23S rRNA + S-adenosyl-L-methionine = 5-methyluridine(1939) in 23S rRNA + S-adenosyl-L-homocysteine + H(+). Functionally, catalyzes the formation of 5-methyl-uridine at position 1939 (m5U1939) in 23S rRNA. The sequence is that of 23S rRNA (uracil(1939)-C(5))-methyltransferase RlmD from Polynucleobacter necessarius subsp. necessarius (strain STIR1).